The sequence spans 473 residues: Membrane protein TMS1 (473 aa).

Residues 1–6 (MGAVIS) are Cytoplasmic-facing. Residues 7-29 (LPVSMAGSFVASCFGGCCSNLVT) traverse the membrane as a helical segment. Residues 30 to 38 (KTASSLGSS) are Vacuolar-facing. A helical transmembrane segment spans residues 39–61 (SLGTRLLYAVWLLLNSLISWVSY). The Cytoplasmic segment spans residues 62–81 (SANKSILWPGKTCTGTGECG). A helical membrane pass occupies residues 82-104 (FFTVHRLNFALGCLHLILALVLT). Residues 105–118 (GVKSTNDVRAALQN) are Vacuolar-facing. Residues 119 to 138 (SWWSLKFILYLCLIVLSFVI) form a helical membrane-spanning segment. The Cytoplasmic segment spans residues 139–144 (PNDFYI). The helical transmembrane segment at 145–167 (FFSKWVSVPSGAIFILVGLILLV) threads the bilayer. Topologically, residues 168–194 (DFAHEWAETCISHVESEDEDSSFWQRF) are vacuolar. The chain crosses the membrane as a helical span at residues 195–217 (LVLGTTSMYTASIIMTVVMYVMF). The Cytoplasmic segment spans residues 218–228 (CHQQCNMNQTA). A helical transmembrane segment spans residues 229–246 (VTVNLILTVITLVLSVNP). At 247-295 (KIQEANPKSGLAQSSMVSVYCTYLTMSAMSSEPDDKMCNPLVRSSGTRK) the chain is on the vacuolar side. Residues 296–318 (FSIILGSLFTFIAIAYTTTRAAA) traverse the membrane as a helical segment. Residues 319-398 (NSAFQGTNTN…DDERTGTKYN (80 aa)) are Cytoplasmic-facing. A helical membrane pass occupies residues 399 to 421 (YTLFHVIFFLATQWIAILLTINV). The Vacuolar portion of the chain corresponds to 422–435 (TQDDVGDFIPVGRT). The chain crosses the membrane as a helical span at residues 436–458 (YFYSWVKIVSAWICYALYGWTVV). Over 459–473 (APAIMPDRFDYENYY) the chain is Cytoplasmic.

This sequence belongs to the TDE1 family.

It is found in the membrane. This chain is Membrane protein TMS1 (TMS1), found in Saccharomyces cerevisiae (strain ATCC 204508 / S288c) (Baker's yeast).